Consider the following 54-residue polypeptide: Large ribosomal subunit protein bL32c (54 aa).

It belongs to the bacterial ribosomal protein bL32 family.

The protein resides in the plastid. It is found in the chloroplast. The protein is Large ribosomal subunit protein bL32c of Lactuca sativa (Garden lettuce).